Here is a 226-residue protein sequence, read N- to C-terminus: PKHD-type hydroxylase PFL_0865 (226 aa).

Residues 78–178 (KVFPPLINCY…RYASFFWTQS (101 aa)) enclose the Fe2OG dioxygenase domain. The Fe cation site is built by histidine 96, aspartate 98, and histidine 159. A 2-oxoglutarate-binding site is contributed by arginine 169.

The cofactor is Fe(2+). It depends on L-ascorbate as a cofactor.

This Pseudomonas fluorescens (strain ATCC BAA-477 / NRRL B-23932 / Pf-5) protein is PKHD-type hydroxylase PFL_0865.